The sequence spans 1002 residues: UPF0182 protein Mvan_1814 (1002 aa).

A run of 7 helical transmembrane segments spans residues 16–36 (VMIA…RLVD), 61–81 (LLLF…AMAL), 112–132 (LVGI…AQNY), 174–194 (FAAT…FGGI), 209–229 (IQLI…YWLD), 258–278 (KLIL…AIVL), and 286–306 (IGVV…PLVV). The disordered stretch occupies residues 891–958 (LFGPGADATA…TGPTQLSAGK (68 aa)). The segment covering 893 to 923 (GPGADATATGPAATEPPAGQAPQPQGNNQPP) has biased composition (low complexity). Over residues 937–950 (PQQPEVPVAVPPTG) the composition is skewed to pro residues.

The protein belongs to the UPF0182 family.

The protein resides in the cell membrane. The chain is UPF0182 protein Mvan_1814 from Mycolicibacterium vanbaalenii (strain DSM 7251 / JCM 13017 / BCRC 16820 / KCTC 9966 / NRRL B-24157 / PYR-1) (Mycobacterium vanbaalenii).